The sequence spans 215 residues: Thiamine-phosphate synthase (215 aa).

Residues Gln40–Lys44 and Asn72 each bind 4-amino-2-methyl-5-(diphosphooxymethyl)pyrimidine. Residues Asp73 and Asp92 each coordinate Mg(2+). Ser111 serves as a coordination point for 4-amino-2-methyl-5-(diphosphooxymethyl)pyrimidine. Thr137 to Thr139 contacts 2-[(2R,5Z)-2-carboxy-4-methylthiazol-5(2H)-ylidene]ethyl phosphate. Residue Lys140 participates in 4-amino-2-methyl-5-(diphosphooxymethyl)pyrimidine binding. 2-[(2R,5Z)-2-carboxy-4-methylthiazol-5(2H)-ylidene]ethyl phosphate contacts are provided by residues Gly169 and Val189–Ser190.

This sequence belongs to the thiamine-phosphate synthase family. The cofactor is Mg(2+).

It carries out the reaction 2-[(2R,5Z)-2-carboxy-4-methylthiazol-5(2H)-ylidene]ethyl phosphate + 4-amino-2-methyl-5-(diphosphooxymethyl)pyrimidine + 2 H(+) = thiamine phosphate + CO2 + diphosphate. It catalyses the reaction 2-(2-carboxy-4-methylthiazol-5-yl)ethyl phosphate + 4-amino-2-methyl-5-(diphosphooxymethyl)pyrimidine + 2 H(+) = thiamine phosphate + CO2 + diphosphate. The catalysed reaction is 4-methyl-5-(2-phosphooxyethyl)-thiazole + 4-amino-2-methyl-5-(diphosphooxymethyl)pyrimidine + H(+) = thiamine phosphate + diphosphate. Its pathway is cofactor biosynthesis; thiamine diphosphate biosynthesis; thiamine phosphate from 4-amino-2-methyl-5-diphosphomethylpyrimidine and 4-methyl-5-(2-phosphoethyl)-thiazole: step 1/1. In terms of biological role, condenses 4-methyl-5-(beta-hydroxyethyl)thiazole monophosphate (THZ-P) and 2-methyl-4-amino-5-hydroxymethyl pyrimidine pyrophosphate (HMP-PP) to form thiamine monophosphate (TMP). The protein is Thiamine-phosphate synthase of Proteus mirabilis (strain HI4320).